Consider the following 513-residue polypeptide: GMP synthase [glutamine-hydrolyzing] (513 aa).

The 190-residue stretch at 9–198 folds into the Glutamine amidotransferase type-1 domain; that stretch reads LILVLDFGSQ…VRRVCECKGQ (190 aa). Cys86 acts as the Nucleophile in catalysis. Catalysis depends on residues His172 and Glu174. The GMPS ATP-PPase domain maps to 199 to 388; it reads WTMENFIEIE…LGIPEHLVWR (190 aa). Residue 226 to 232 participates in ATP binding; that stretch reads SGGVDSS.

As to quaternary structure, homodimer.

The catalysed reaction is XMP + L-glutamine + ATP + H2O = GMP + L-glutamate + AMP + diphosphate + 2 H(+). It participates in purine metabolism; GMP biosynthesis; GMP from XMP (L-Gln route): step 1/1. In terms of biological role, catalyzes the synthesis of GMP from XMP. The protein is GMP synthase [glutamine-hydrolyzing] of Staphylococcus aureus (strain MSSA476).